The chain runs to 116 residues: Large ribosomal subunit protein bL17 (116 aa).

The protein belongs to the bacterial ribosomal protein bL17 family. As to quaternary structure, part of the 50S ribosomal subunit. Contacts protein L32.

The polypeptide is Large ribosomal subunit protein bL17 (Trichormus variabilis (strain ATCC 29413 / PCC 7937) (Anabaena variabilis)).